The primary structure comprises 317 residues: Acetyl-coenzyme A carboxylase carboxyl transferase subunit alpha (317 aa).

Residues 40–293 (LEGRVRDAMM…GTVIADALKE (254 aa)) form the CoA carboxyltransferase C-terminal domain.

This sequence belongs to the AccA family. In terms of assembly, acetyl-CoA carboxylase is a heterohexamer composed of biotin carboxyl carrier protein (AccB), biotin carboxylase (AccC) and two subunits each of ACCase subunit alpha (AccA) and ACCase subunit beta (AccD).

Its subcellular location is the cytoplasm. It carries out the reaction N(6)-carboxybiotinyl-L-lysyl-[protein] + acetyl-CoA = N(6)-biotinyl-L-lysyl-[protein] + malonyl-CoA. It functions in the pathway lipid metabolism; malonyl-CoA biosynthesis; malonyl-CoA from acetyl-CoA: step 1/1. In terms of biological role, component of the acetyl coenzyme A carboxylase (ACC) complex. First, biotin carboxylase catalyzes the carboxylation of biotin on its carrier protein (BCCP) and then the CO(2) group is transferred by the carboxyltransferase to acetyl-CoA to form malonyl-CoA. The protein is Acetyl-coenzyme A carboxylase carboxyl transferase subunit alpha of Sinorhizobium fredii (strain NBRC 101917 / NGR234).